The following is a 548-amino-acid chain: MAVALNIADLAEHAIDAVPDRVAVICGDEQLTYAQLEDKANRLAHHLIDQGVQKDDKVGLYCRNRIEIVIAMLGIVKAGAILVNVNFRYVEGELRYLFDNSDMVALVHERRYADRVANVLPDTPHVRTILVVEDGSDQDYRRYGGVEFYSAIAAGSPERDFGERSADAIYLLYTGGTTGFPKGVMWRHEDIYRVLFGGTDFATGEFVKDEYDLAKAAAANPPMIRYPIPPMIHGATQSATWMALFSGQTTVLAPEFNADEVWRTIHKHKVNLLFFTGDAMARPLVDALVKGNDYDLSSLFLLASTAALFSPSIKEKLLELLPNRVITDSIGSSETGFGGTSVVAAGQAHGGGPRVRIDHRTVVLDDDGNEVKPGSGMRGVIAKKGNIPVGYYKDEKKTAETFRTINGVRYAIPGDYAQVEEDGTVTMLGRGSVSINSGGEKVYPEEVEAALKGHPDVFDALVVGVPDPRYGQQVAAVVQARPGCRPSLAELDSFVRSEIAGYKVPRSLWFVDEVKRSPAGKPDYRWAKEQTEARPADDVHAGHVTSGG.

Residues 174–182, D415, R430, and K521 contribute to the ATP site; that span reads TGGTTGFPK. Residues 520–541 are compositionally biased toward basic and acidic residues; sequence GKPDYRWAKEQTEARPADDVHA. The interval 520–548 is disordered; the sequence is GKPDYRWAKEQTEARPADDVHAGHVTSGG.

This sequence belongs to the ATP-dependent AMP-binding enzyme family.

It catalyses the reaction a medium-chain fatty acid + ATP + CoA = a medium-chain fatty acyl-CoA + AMP + diphosphate. The catalysed reaction is a long-chain fatty acid + ATP + CoA = a long-chain fatty acyl-CoA + AMP + diphosphate. The enzyme catalyses (25S)-3-oxocholest-4-en-26-oate + ATP + CoA = (25S)-3-oxocholest-4-en-26-oyl-CoA + AMP + diphosphate. The protein operates within lipid metabolism; fatty acid biosynthesis. It functions in the pathway steroid metabolism; cholesterol metabolism. Functionally, catalyzes the activation of medium/long-chain fatty acids as acyl-coenzyme A (acyl-CoA), which are then transferred to the multifunctional polyketide synthase (PKS) type III for further chain extension. Also involved in the degradation of cholesterol via the degradation of the side chains of C-24 branched-chain sterols. Catalyzes the ATP-dependent CoA thioesterification of the sterol 3-oxocholest-4-en-26-oate to yield 3-oxocholest-4-en-26-oyl-CoA. This is Medium/long-chain-fatty-acid--CoA/3-oxocholest-4-en-26-oate--CoA ligase from Mycobacterium bovis (strain ATCC BAA-935 / AF2122/97).